The chain runs to 164 residues: Transcription factor E (164 aa).

Residues 5–87 (NDKVIRGYLR…LWHLDFSDIE (83 aa)) form the HTH TFE/IIEalpha-type domain.

Belongs to the TFE family. Monomer. Interaction with RNA polymerase subunits RpoF and RpoE is necessary for Tfe stimulatory transcription activity. Able to interact with Tbp and RNA polymerase in the absence of DNA promoter. Interacts both with the preinitiation and elongation complexes.

Its function is as follows. Transcription factor that plays a role in the activation of archaeal genes transcribed by RNA polymerase. Facilitates transcription initiation by enhancing TATA-box recognition by TATA-box-binding protein (Tbp), and transcription factor B (Tfb) and RNA polymerase recruitment. Not absolutely required for transcription in vitro, but particularly important in cases where Tbp or Tfb function is not optimal. It dynamically alters the nucleic acid-binding properties of RNA polymerases by stabilizing the initiation complex and destabilizing elongation complexes. Seems to translocate with the RNA polymerase following initiation and acts by binding to the non template strand of the transcription bubble in elongation complexes. The protein is Transcription factor E of Methanosarcina mazei (strain ATCC BAA-159 / DSM 3647 / Goe1 / Go1 / JCM 11833 / OCM 88) (Methanosarcina frisia).